The sequence spans 71 residues: MRERFQYNKAIVMFYLNEVLLKEEMPARARRLFIETFRKYHKLDGGDENIALHLAFKAVERRYVKLNNRWI.

This is an uncharacterized protein from Lepidoptera (butterflies and moths).